A 489-amino-acid polypeptide reads, in one-letter code: Betaine aldehyde dehydrogenase (489 aa).

The K(+) site is built by threonine 26 and aspartate 93. 150–152 is an NAD(+) binding site; the sequence is GAW. Lysine 162 acts as the Charge relay system in catalysis. An NAD(+)-binding site is contributed by 176–179; it reads KPSE. Valine 180 is a binding site for K(+). Residue 229–232 coordinates NAD(+); sequence GVET. Leucine 245 provides a ligand contact to K(+). The active-site Proton acceptor is the glutamate 251. Glycine 253, cysteine 285, and glutamate 386 together coordinate NAD(+). Cysteine 285 functions as the Nucleophile in the catalytic mechanism. At cysteine 285 the chain carries Cysteine sulfenic acid (-SOH). Residues lysine 456 and glycine 459 each coordinate K(+). The active-site Charge relay system is glutamate 463.

Belongs to the aldehyde dehydrogenase family. As to quaternary structure, dimer of dimers. It depends on K(+) as a cofactor.

The catalysed reaction is betaine aldehyde + NAD(+) + H2O = glycine betaine + NADH + 2 H(+). It participates in amine and polyamine biosynthesis; betaine biosynthesis via choline pathway; betaine from betaine aldehyde: step 1/1. Its function is as follows. Involved in the biosynthesis of the osmoprotectant glycine betaine. Catalyzes the irreversible oxidation of betaine aldehyde to the corresponding acid. The protein is Betaine aldehyde dehydrogenase of Burkholderia orbicola (strain AU 1054).